The chain runs to 545 residues: Chaperonin GroEL (545 aa).

ATP contacts are provided by residues 29-32 (TLGP), Lys50, 86-90 (DGTTT), Gly415, and Asp495.

It belongs to the chaperonin (HSP60) family. Forms a cylinder of 14 subunits composed of two heptameric rings stacked back-to-back. Interacts with the co-chaperonin GroES.

The protein localises to the cytoplasm. The enzyme catalyses ATP + H2O + a folded polypeptide = ADP + phosphate + an unfolded polypeptide.. In terms of biological role, together with its co-chaperonin GroES, plays an essential role in assisting protein folding. The GroEL-GroES system forms a nano-cage that allows encapsulation of the non-native substrate proteins and provides a physical environment optimized to promote and accelerate protein folding. This chain is Chaperonin GroEL, found in Phocaeicola vulgatus (strain ATCC 8482 / DSM 1447 / JCM 5826 / CCUG 4940 / NBRC 14291 / NCTC 11154) (Bacteroides vulgatus).